The primary structure comprises 120 residues: Putative ankyrin repeat protein RBE_1215 (120 aa).

ANK repeat units lie at residues 22-52 (DGGN…LTNI) and 59-88 (FGDT…ITSV).

The polypeptide is Putative ankyrin repeat protein RBE_1215 (Rickettsia bellii (strain RML369-C)).